The primary structure comprises 348 residues: N-formyl peptide receptor 2 (348 aa).

N1 carries an N-linked (GlcNAc...) asparagine glycan. Topologically, residues 1 to 24 (NFSTPLNEHEEVSYESAGYTVLRI) are extracellular. Residues 25–47 (LPLVVLGVTFVLGVLGNGLVIWV) form a helical membrane-spanning segment. Topologically, residues 48–58 (AGFRMTRTVTT) are cytoplasmic. Residues 59 to 80 (ICYLNLALADFSFTATLPFLIV) form a helical membrane-spanning segment. Topologically, residues 81 to 97 (SMAMGEKWPFGWFLCKL) are extracellular. C95 and C173 are oxidised to a cystine. Residues 98–118 (IHIVVDINLFGSVFLIGFIAL) traverse the membrane as a helical segment. At 119 to 137 (DRCICVLHPVWAQNHRTVS) the chain is on the cytoplasmic side. The helical transmembrane segment at 138-159 (LAMKVIVGPWILALVLTLPVFL) threads the bilayer. Topologically, residues 160-202 (FLTTVTIPNGDTYCTFNFASWGGTPEERQKVAITMLTARGIIR) are extracellular. A helical membrane pass occupies residues 203–223 (FVIGFSLPMSIVAICYGLIAA). Residues 224-239 (KIHKKGMIKSSRPLRV) lie on the Cytoplasmic side of the membrane. The chain crosses the membrane as a helical span at residues 240–263 (LTAVVASFFICWFPFQLVALLGTV). The Extracellular segment spans residues 264-283 (WLKEMLFYGKYKIIDILVNP). The helical transmembrane segment at 284-303 (TSSLAFFNSCLNPMLYVFVG) threads the bilayer. The Cytoplasmic segment spans residues 304–348 (QDFRERLIHSLPTSLERALSEDSAPTNDTAASCASPPAETELQAM). The interval 323–348 (SEDSAPTNDTAASCASPPAETELQAM) is disordered. Residues 326 to 335 (SAPTNDTAAS) show a composition bias toward polar residues.

This sequence belongs to the G-protein coupled receptor 1 family. In terms of assembly, interacts with APP; the interaction takes place at the cell surface and the complex is then rapidly internalized.

The protein resides in the cell membrane. Low affinity receptor for N-formyl-methionyl peptides, which are powerful neutrophil chemotactic factors. Binding of FMLP to the receptor causes activation of neutrophils. This response is mediated via a G-protein that activates a phosphatidylinositol-calcium second messenger system. Receptor for the chemokine-like protein FAM19A5, mediating FAM19A5-stimulated macrophage chemotaxis and the inhibitory effect on TNFSF11/RANKL-induced osteoclast differentiation. In Gorilla gorilla gorilla (Western lowland gorilla), this protein is N-formyl peptide receptor 2 (FPR2).